We begin with the raw amino-acid sequence, 358 residues long: Uroporphyrinogen decarboxylase (358 aa).

Substrate contacts are provided by residues 36–40, Asp-85, Tyr-160, Ser-215, and His-338; that span reads RQAGR.

The protein belongs to the uroporphyrinogen decarboxylase family. As to quaternary structure, homodimer.

The protein localises to the cytoplasm. The catalysed reaction is uroporphyrinogen III + 4 H(+) = coproporphyrinogen III + 4 CO2. Its pathway is porphyrin-containing compound metabolism; protoporphyrin-IX biosynthesis; coproporphyrinogen-III from 5-aminolevulinate: step 4/4. Catalyzes the decarboxylation of four acetate groups of uroporphyrinogen-III to yield coproporphyrinogen-III. The sequence is that of Uroporphyrinogen decarboxylase from Corynebacterium glutamicum (strain ATCC 13032 / DSM 20300 / JCM 1318 / BCRC 11384 / CCUG 27702 / LMG 3730 / NBRC 12168 / NCIMB 10025 / NRRL B-2784 / 534).